Here is a 57-residue protein sequence, read N- to C-terminus: MMKIIYAFLLIAVVAFMGSGIMAEPLAEAIAADKPGQAKEIGIFDRITELINWLVNH.

A signal peptide spans Met1–Ala23. A propeptide spanning residues Glu24–Ala31 is cleaved from the precursor.

It belongs to the formicidae venom clade 4 family. In terms of tissue distribution, expressed by the venom gland.

The protein resides in the secreted. Probable neurotoxin. The polypeptide is Myrmicitoxin(1)-Pm7a (Pogonomyrmex maricopa (Maricopa harvester ant)).